We begin with the raw amino-acid sequence, 243 residues long: Carboxy-S-adenosyl-L-methionine synthase (243 aa).

Residues tyrosine 35, glycine 68–serine 70, aspartate 92–asparagine 93, and arginine 199 contribute to the S-adenosyl-L-methionine site.

The protein belongs to the class I-like SAM-binding methyltransferase superfamily. Cx-SAM synthase family. Homodimer.

It catalyses the reaction prephenate + S-adenosyl-L-methionine = carboxy-S-adenosyl-L-methionine + 3-phenylpyruvate + H2O. Catalyzes the conversion of S-adenosyl-L-methionine (SAM) to carboxy-S-adenosyl-L-methionine (Cx-SAM). The chain is Carboxy-S-adenosyl-L-methionine synthase from Helicobacter pylori (strain ATCC 700392 / 26695) (Campylobacter pylori).